Reading from the N-terminus, the 71-residue chain is Sec-independent protein translocase protein TatA (71 aa).

Residues 1-21 (MGSFSIWHWLIVLVIVALIFG) form a helical membrane-spanning segment. The segment at 48 to 71 (ADKTEQVTQQQTTIDVQAKEKQNS) is disordered.

It belongs to the TatA/E family. As to quaternary structure, the Tat system comprises two distinct complexes: a TatABC complex, containing multiple copies of TatA, TatB and TatC subunits, and a separate TatA complex, containing only TatA subunits. Substrates initially bind to the TatABC complex, which probably triggers association of the separate TatA complex to form the active translocon.

Its subcellular location is the cell inner membrane. Functionally, part of the twin-arginine translocation (Tat) system that transports large folded proteins containing a characteristic twin-arginine motif in their signal peptide across membranes. TatA could form the protein-conducting channel of the Tat system. The protein is Sec-independent protein translocase protein TatA of Bordetella avium (strain 197N).